We begin with the raw amino-acid sequence, 310 residues long: tRNA dimethylallyltransferase (310 aa).

10–17 (GPTAVGKS) contributes to the ATP binding site. Residue 12–17 (TAVGKS) coordinates substrate. Interaction with substrate tRNA regions lie at residues 35–38 (DSAQ), 159–163 (QRIQR), and 274–281 (KRQITWLR).

It belongs to the IPP transferase family. In terms of assembly, monomer. It depends on Mg(2+) as a cofactor.

The catalysed reaction is adenosine(37) in tRNA + dimethylallyl diphosphate = N(6)-dimethylallyladenosine(37) in tRNA + diphosphate. Functionally, catalyzes the transfer of a dimethylallyl group onto the adenine at position 37 in tRNAs that read codons beginning with uridine, leading to the formation of N6-(dimethylallyl)adenosine (i(6)A). The polypeptide is tRNA dimethylallyltransferase (Halorhodospira halophila (strain DSM 244 / SL1) (Ectothiorhodospira halophila (strain DSM 244 / SL1))).